The sequence spans 199 residues: MQAITLEAVKRETGKSAARRLKNQGYVPAIMYGKDMTENIPLAVEYTKLQKLLQKYGRNVLLNVVVNGTTHTALIKEIQEDTLKGKIIHVDFQRVSMYEEIEATVPLRFEGIGLIESKGGIVQHQLWELTVESLPDKIPQEIVVDLSHLEIGDTLFVKDIPVPEGVKVLDDPEEIVVSILVPKEAGEEEEEEGEGTAEG.

Belongs to the bacterial ribosomal protein bL25 family. CTC subfamily. Part of the 50S ribosomal subunit; part of the 5S rRNA/L5/L18/L25 subcomplex. Contacts the 5S rRNA. Binds to the 5S rRNA independently of L5 and L18.

In terms of biological role, this is one of the proteins that binds to the 5S RNA in the ribosome where it forms part of the central protuberance. The chain is Large ribosomal subunit protein bL25 from Caldanaerobacter subterraneus subsp. tengcongensis (strain DSM 15242 / JCM 11007 / NBRC 100824 / MB4) (Thermoanaerobacter tengcongensis).